A 507-amino-acid chain; its full sequence is Dihydrolipoyl dehydrogenase 1, mitochondrial (507 aa).

Residues 1–36 (MAMASLARRKAYFLTRNLSNSPTDALRFSFSLSRGF) constitute a mitochondrion transit peptide. FAD-binding positions include 73-82 (EKRGALGGTC), K91, G155, and 184-186 (TGS). C82 and C87 are disulfide-bonded. NAD(+)-binding positions include 221 to 228 (GAGYIGLE), E244, V278, and G313. FAD is bound by residues D354 and 360–363 (MLAH). H486 acts as the Proton acceptor in catalysis.

This sequence belongs to the class-I pyridine nucleotide-disulfide oxidoreductase family. Homodimer. Part of both the glycine cleavage system composed of four proteins: P, T, L and H and of the pyruvate dehydrogenase complex containing multiple copies of three enzymatic components: pyruvate dehydrogenase (E1), dihydrolipoamide acetyltransferase (E2) and lipoamide dehydrogenase (E3). It depends on FAD as a cofactor. Post-translationally, S-nytrosylated at unknown positions. In terms of tissue distribution, preferentially expressed in leaves, flowers and siliques and at a lower level in roots and stems.

It localises to the mitochondrion matrix. It catalyses the reaction N(6)-[(R)-dihydrolipoyl]-L-lysyl-[protein] + NAD(+) = N(6)-[(R)-lipoyl]-L-lysyl-[protein] + NADH + H(+). Its function is as follows. Lipoamide dehydrogenase is a component of the glycine decarboxylase (GDC) or glycine cleavage system as well as of the alpha-ketoacid dehydrogenase complexes. LPD1 is probably the protein most often associated with the glycine decarboxylase complex while LPD2 is probably incorporated into alpha-ketoacid dehydrogenase complexes. The sequence is that of Dihydrolipoyl dehydrogenase 1, mitochondrial (LPD1) from Arabidopsis thaliana (Mouse-ear cress).